We begin with the raw amino-acid sequence, 382 residues long: Galactokinase (382 aa).

34-37 contributes to the substrate binding site; it reads EHTD. 124–130 contributes to the ATP binding site; the sequence is GAGLSSS. Mg(2+) is bound by residues Ser-130 and Glu-162. Asp-174 functions as the Proton acceptor in the catalytic mechanism. Position 223 (Tyr-223) interacts with substrate.

Belongs to the GHMP kinase family. GalK subfamily.

The protein localises to the cytoplasm. The enzyme catalyses alpha-D-galactose + ATP = alpha-D-galactose 1-phosphate + ADP + H(+). The protein operates within carbohydrate metabolism; galactose metabolism. In terms of biological role, catalyzes the transfer of the gamma-phosphate of ATP to D-galactose to form alpha-D-galactose-1-phosphate (Gal-1-P). The sequence is that of Galactokinase from Salmonella typhi.